The chain runs to 84 residues: Cell division topological specificity factor (84 aa).

This sequence belongs to the MinE family.

Prevents the cell division inhibition by proteins MinC and MinD at internal division sites while permitting inhibition at polar sites. This ensures cell division at the proper site by restricting the formation of a division septum at the midpoint of the long axis of the cell. This chain is Cell division topological specificity factor, found in Ectopseudomonas mendocina (strain ymp) (Pseudomonas mendocina).